Reading from the N-terminus, the 130-residue chain is Holo-[acyl-carrier-protein] synthase (130 aa).

Mg(2+) is bound by residues Asp-9 and Glu-58.

The protein belongs to the P-Pant transferase superfamily. AcpS family. Mg(2+) serves as cofactor.

The protein localises to the cytoplasm. It carries out the reaction apo-[ACP] + CoA = holo-[ACP] + adenosine 3',5'-bisphosphate + H(+). Its function is as follows. Transfers the 4'-phosphopantetheine moiety from coenzyme A to a Ser of acyl-carrier-protein. The protein is Holo-[acyl-carrier-protein] synthase of Mycobacterium tuberculosis (strain CDC 1551 / Oshkosh).